We begin with the raw amino-acid sequence, 1226 residues long: MGSKVRQQIEAQLKQRILLIDGGMGTMIQGYKLEEQDYRGERFANWHCDLKGNNDLLVLSQPQLIKEIHSAYLEAGADILETNTFNATTIAMADYEMESLSEEINFAAAKLAREVADEWTAKTPDKPRYVAGVLGPTNRTCSISPDVNDPGYRNVSFDELVEAYSESTRALIRGGADLILIETIFDTLNAKACAFAVDSVFEELGVALPVMISGTITDASGRTLSGQTTEAFYNSLRHVRPLSFGLNCALGPDELRPYVEELSRISESFVSAHPNAGLPNAFGEYDLSPEDMAEHVKEWASSGFLNLIGGCCGTTPEHIRQMAQAVEGVTPRALPDLPVACRLSGLEPLTIEKETLFINVGERTNVTGSARFKRLIKEEQYDEALEVARQQVENGAQIIDINMDEGMLDAQACMVRFLNLCASEPEISKVPIMVDSSKWEVIEAGLKCIQGKGIVNSISLKEGKEKFVEQAKLIRRYGAAVIVMAFDEVGQAETRTRKLEICTNAYRILVDEVGFPPEDIIFDPNIFAVATGIDEHNNYAVDFIEAVADIKRDLPHAMISGGVSNVSFSFRGNNYVREAIHAVFLYHCFKNGMDMGIVNAGQLEIYDNVPEKLREAVEDVVLNRRDDATERLLDIAAEYADKGVGKEEDASALEWRTWPVAKRLEHALVKGITEFIVADTEEARVNAVKPLEVIEGPLMDGMNVVGDLFGEGKMFLPQVVKSARVMKQAVAHLEPFINAEKQSGSSNGKILLATVKGDVHDIGKNIVGVVLQCNNYEIIDLGVMVPCEKILKVAIEENVDIIGLSGLITPSLDEMVHVAKEMERLNFDLPLLIGGATTSKAHTAVKIEQNYKNPVVYVNNASRAVGVCSSLLSDERRPAFIEKLDADYERVRDQHNRKKPRTKPVTLEQARANKVAIDWDAYTPPVPAKPGLHIFDDFDVATLRKYIDWTPFFMTWSLVGKYPTIFKHEEVGEEAQRLFHDANELLDRVEREGLLKARGICGLFPAASVGDDIEVYTDESRTEVAKVLRNLRQQTEKPKGFNYCLSDYIAPKESGKQDWVGAFAVTGGIGERELADEYKAQGDDYNAIMIQAVADRLAEAFAEYLHERVRKEIWGYAADENLSNDELIREKYQGIRPAPGYPACPEHTEKGPLWELLNVEENIGMSLTTSYAMYPGASVSGWYFSHPDSRYFAIAQIQDDQLESYADRKGWDRIEAEKWLGPNING.

One can recognise a Hcy-binding domain in the interval 6 to 326; that stretch reads RQQIEAQLKQ…EHIRQMAQAV (321 aa). Zn(2+) contacts are provided by C248, C311, and C312. The Pterin-binding domain occupies 357–618; the sequence is FINVGERTNV…VPEKLREAVE (262 aa). A B12-binding N-terminal domain is found at 651–745; it reads SALEWRTWPV…FINAEKQSGS (95 aa). Residues E695, 757–761, H760, S805, T809, and A861 contribute to the methylcob(III)alamin site; that span reads GDVHD. Residues 747–882 form the B12-binding domain; the sequence is NGKILLATVK…SDERRPAFIE (136 aa). One can recognise an AdoMet activation domain in the interval 898–1226; that stretch reads KKPRTKPVTL…EKWLGPNING (329 aa). S-adenosyl-L-methionine is bound by residues D948, R1136, and 1191 to 1192; that span reads YF.

Belongs to the vitamin-B12 dependent methionine synthase family. The cofactor is methylcob(III)alamin. It depends on Zn(2+) as a cofactor.

It carries out the reaction (6S)-5-methyl-5,6,7,8-tetrahydrofolate + L-homocysteine = (6S)-5,6,7,8-tetrahydrofolate + L-methionine. It participates in amino-acid biosynthesis; L-methionine biosynthesis via de novo pathway; L-methionine from L-homocysteine (MetH route): step 1/1. In terms of biological role, catalyzes the transfer of a methyl group from methyl-cobalamin to homocysteine, yielding enzyme-bound cob(I)alamin and methionine. Subsequently, remethylates the cofactor using methyltetrahydrofolate. The polypeptide is Methionine synthase (metH) (Vibrio parahaemolyticus serotype O3:K6 (strain RIMD 2210633)).